The following is an 828-amino-acid chain: Cadherin-22 (828 aa).

The N-terminal stretch at 1–34 (MRPRPEGRGLRAGVALSPALLLLLLLPPPPTLLG) is a signal peptide. Residues 36–624 (LWAAGTPSPS…AFVMAASLSP (589 aa)) lie on the Extracellular side of the membrane. Cadherin domains are found at residues 64 to 168 (WVWN…EPRF), 169 to 277 (LHGP…PPRF), 278 to 394 (PQKM…PPEF), 395 to 498 (RPPS…NPPE), and 499 to 616 (LATP…TTAF). The N-linked (GlcNAc...) asparagine glycan is linked to N162. N-linked (GlcNAc...) asparagine glycans are attached at residues N466 and N612. A helical membrane pass occupies residues 625–645 (GALIALLVCVLILVVLVLLIL). The Cytoplasmic portion of the chain corresponds to 646-828 (TLRRHHKSHL…HRGDDEAQAS (183 aa)). A compositionally biased stretch (gly residues) spans 702–719 (GGGSAGGGAGGGSGGGAG). Positions 702–745 (GGGSAGGGAGGGSGGGAGSPPQAHLPSERHSLPQGPPSPEPDFS) are disordered.

Its subcellular location is the cell membrane. Cadherins are calcium-dependent cell adhesion proteins. They preferentially interact with themselves in a homophilic manner in connecting cells; cadherins may thus contribute to the sorting of heterogeneous cell types. PB-cadherins may have a role in the morphological organization of pituitary gland and brain tissues. The chain is Cadherin-22 (CDH22) from Homo sapiens (Human).